The chain runs to 926 residues: Tyrosine-protein phosphatase non-receptor type 4 (926 aa).

In terms of domain architecture, FERM spans valine 29–arginine 312. Disordered regions lie at residues serine 379–arginine 412, serine 429–serine 474, and asparagine 492–proline 511. Composition is skewed to polar residues over residues asparagine 398–alanine 408 and phenylalanine 432–glutamate 455. Serine 474 is subject to Phosphoserine. A PDZ domain is found at leucine 517–serine 589. Positions valine 655–valine 911 constitute a Tyrosine-protein phosphatase domain. Substrate is bound by residues aspartate 820, cysteine 852–arginine 858, and glutamine 896. Cysteine 852 (phosphocysteine intermediate) is an active-site residue.

The protein belongs to the protein-tyrosine phosphatase family. Non-receptor class subfamily. In terms of tissue distribution, highly expressed in testis. Specifically expressed in spermatocytes and spermatids within seminiferous tubules (at protein level).

The protein resides in the cell membrane. It is found in the cytoplasm. The protein localises to the cytoskeleton. The catalysed reaction is O-phospho-L-tyrosyl-[protein] + H2O = L-tyrosyl-[protein] + phosphate. Its function is as follows. Phosphatase that plays a role in immunity, learning, synaptic plasticity or cell homeostasis. Regulates neuronal cell homeostasis by protecting neurons against apoptosis. Negatively regulates TLR4-induced interferon beta production by dephosphorylating adapter TICAM2 and inhibiting subsequent TRAM-TRIF interaction. Dephosphorylates also the immunoreceptor tyrosine-based activation motifs/ITAMs of the TCR zeta subunit and thereby negatively regulates TCR-mediated signaling pathway. May act at junctions between the membrane and the cytoskeleton. This Mus musculus (Mouse) protein is Tyrosine-protein phosphatase non-receptor type 4 (Ptpn4).